The primary structure comprises 430 residues: Dihydroorotase (430 aa).

Residues His60 and His62 each contribute to the Zn(2+) site. Substrate contacts are provided by residues 62–64 (HFR) and Asn94. Asp151, His178, and His231 together coordinate Zn(2+). Asn277 contributes to the substrate binding site. Zn(2+) is bound at residue Asp304. Asp304 is an active-site residue. Substrate is bound by residues His308 and 322–323 (FG).

This sequence belongs to the metallo-dependent hydrolases superfamily. DHOase family. Class I DHOase subfamily. The cofactor is Zn(2+).

It catalyses the reaction (S)-dihydroorotate + H2O = N-carbamoyl-L-aspartate + H(+). It functions in the pathway pyrimidine metabolism; UMP biosynthesis via de novo pathway; (S)-dihydroorotate from bicarbonate: step 3/3. Functionally, catalyzes the reversible cyclization of carbamoyl aspartate to dihydroorotate. This Carboxydothermus hydrogenoformans (strain ATCC BAA-161 / DSM 6008 / Z-2901) protein is Dihydroorotase.